The chain runs to 804 residues: Phenylalanine--tRNA ligase beta subunit (804 aa).

The 116-residue stretch at 40-155 (DRGMKGVVIG…SDAPIGADAI (116 aa)) folds into the tRNA-binding domain. A B5 domain is found at 409 to 484 (QDSVVVTVTL…RLYGYDRLPA (76 aa)). Asp-462, Asp-468, Glu-471, and Glu-472 together coordinate Mg(2+). In terms of domain architecture, FDX-ACB spans 710-803 (PRFPSVVRDI…VEKQFGAVLR (94 aa)).

Belongs to the phenylalanyl-tRNA synthetase beta subunit family. Type 1 subfamily. In terms of assembly, tetramer of two alpha and two beta subunits. Requires Mg(2+) as cofactor.

Its subcellular location is the cytoplasm. The enzyme catalyses tRNA(Phe) + L-phenylalanine + ATP = L-phenylalanyl-tRNA(Phe) + AMP + diphosphate + H(+). The sequence is that of Phenylalanine--tRNA ligase beta subunit from Geobacillus kaustophilus (strain HTA426).